Consider the following 156-residue polypeptide: uncharacterized protein (156 aa).

Disordered regions lie at residues 22–64 (KERV…VLKK) and 81–156 (AARA…DENE). A compositionally biased stretch (acidic residues) spans 43–56 (PEEDGDHSDKEDEQ). Residue Ser-50 is modified to Phosphoserine. Position 108 is an N6-acetyllysine (Lys-108). Residues 121-134 (TKEEDEINKQDSVK) are compositionally biased toward basic and acidic residues. Phosphoserine is present on Ser-148.

This is an uncharacterized protein from Bos taurus (Bovine).